Reading from the N-terminus, the 107-residue chain is Large ribosomal subunit protein uL24 (107 aa).

It belongs to the universal ribosomal protein uL24 family. As to quaternary structure, part of the 50S ribosomal subunit.

Its function is as follows. One of two assembly initiator proteins, it binds directly to the 5'-end of the 23S rRNA, where it nucleates assembly of the 50S subunit. One of the proteins that surrounds the polypeptide exit tunnel on the outside of the subunit. The chain is Large ribosomal subunit protein uL24 from Thermotoga neapolitana (strain ATCC 49049 / DSM 4359 / NBRC 107923 / NS-E).